The chain runs to 1814 residues: U3 small nucleolar RNA-associated protein 10 (1814 aa).

The stretch at 583 to 620 (LDFQALLPFLLVALTDASERVRREAAAALAAVGSLYKK) is one HEAT 1 repeat. A run of 2 helical transmembrane segments spans residues 942 to 962 (IQSG…AIVN) and 998 to 1018 (ALLL…HSVM). 4 HEAT repeats span residues 1042–1079 (QTID…AFEH), 1249–1286 (LTLV…QNPE), 1293–1331 (IRVL…KYGK), and 1770–1807 (ALLP…VLGE).

Belongs to the HEATR1/UTP10 family. As to quaternary structure, component of the ribosomal small subunit (SSU) processome.

The protein localises to the nucleus. The protein resides in the nucleolus. Its subcellular location is the membrane. Its function is as follows. Involved in nucleolar processing of pre-18S ribosomal RNA. Involved in ribosome biosynthesis. In Neosartorya fischeri (strain ATCC 1020 / DSM 3700 / CBS 544.65 / FGSC A1164 / JCM 1740 / NRRL 181 / WB 181) (Aspergillus fischerianus), this protein is U3 small nucleolar RNA-associated protein 10.